Consider the following 59-residue polypeptide: Large ribosomal subunit protein bL32 (59 aa).

A compositionally biased stretch (basic residues) spans 1 to 16 (MAVPKRKVSPHRRGNR). A disordered region spans residues 1–20 (MAVPKRKVSPHRRGNRRAHD).

This sequence belongs to the bacterial ribosomal protein bL32 family.

In Erythrobacter litoralis (strain HTCC2594), this protein is Large ribosomal subunit protein bL32.